A 422-amino-acid polypeptide reads, in one-letter code: Protein MANNAN SYNTHESIS-RELATED 1 (422 aa).

At 1–6 (MGVDLR) the chain is on the cytoplasmic side. Residues 7–26 (QVVAGILTITMFVMLGQMLH) form a helical; Signal-anchor for type II membrane protein membrane-spanning segment. The Lumenal portion of the chain corresponds to 27–422 (RDYFDSLQEK…KNHLAYSCFC (396 aa)). Position 263-265 (263-265 (DLR)) interacts with substrate.

Belongs to the glycosyltransferase GT106 family. As to expression, widely expressed.

It localises to the golgi apparatus membrane. It participates in glycan biosynthesis. In terms of biological role, glycosyltransferase involved in mannan biosynthesis. The polypeptide is Protein MANNAN SYNTHESIS-RELATED 1 (Arabidopsis thaliana (Mouse-ear cress)).